Here is a 103-residue protein sequence, read N- to C-terminus: Cell division protein FtsB (103 aa).

Residues Met-1–Lys-3 lie on the Cytoplasmic side of the membrane. The helical transmembrane segment at Leu-4 to Phe-21 threads the bilayer. Residues Gly-22–Arg-103 are Periplasmic-facing. Residues Arg-31 to Ala-71 are a coiled coil.

It belongs to the FtsB family. In terms of assembly, part of a complex composed of FtsB, FtsL and FtsQ.

It is found in the cell inner membrane. Functionally, essential cell division protein. May link together the upstream cell division proteins, which are predominantly cytoplasmic, with the downstream cell division proteins, which are predominantly periplasmic. This chain is Cell division protein FtsB, found in Shigella boydii serotype 18 (strain CDC 3083-94 / BS512).